We begin with the raw amino-acid sequence, 383 residues long: tRNA(Met) cytidine acetate ligase (383 aa).

ATP-binding positions include 7–20, G101, N150, and R175; that span reads ITEYNPLHNGHRYH.

It belongs to the TmcAL family.

It is found in the cytoplasm. The catalysed reaction is cytidine(34) in elongator tRNA(Met) + acetate + ATP = N(4)-acetylcytidine(34) in elongator tRNA(Met) + AMP + diphosphate. In terms of biological role, catalyzes the formation of N(4)-acetylcytidine (ac(4)C) at the wobble position of elongator tRNA(Met), using acetate and ATP as substrates. First activates an acetate ion to form acetyladenylate (Ac-AMP) and then transfers the acetyl group to tRNA to form ac(4)C34. This chain is tRNA(Met) cytidine acetate ligase, found in Lactiplantibacillus plantarum (strain ATCC BAA-793 / NCIMB 8826 / WCFS1) (Lactobacillus plantarum).